Consider the following 800-residue polypeptide: DNA topoisomerase 4 subunit A (800 aa).

A Topo IIA-type catalytic domain is found at L31–E495. Y119 acts as the O-(5'-phospho-DNA)-tyrosine intermediate in catalysis.

The protein belongs to the type II topoisomerase GyrA/ParC subunit family. ParC type 2 subfamily. Heterotetramer composed of ParC and ParE.

It is found in the cell membrane. It catalyses the reaction ATP-dependent breakage, passage and rejoining of double-stranded DNA.. Its function is as follows. Topoisomerase IV is essential for chromosome segregation. It relaxes supercoiled DNA. Performs the decatenation events required during the replication of a circular DNA molecule. The sequence is that of DNA topoisomerase 4 subunit A from Staphylococcus aureus (strain MRSA252).